The following is a 220-amino-acid chain: Claudin-24 (220 aa).

Residues 1–10 (MALIFRTAMQ) lie on the Cytoplasmic side of the membrane. A helical membrane pass occupies residues 11 to 31 (SVGLLLSLLGWILSIITTYLP). Over 32 to 81 (HWKNLNLDLNEMENWTMGLWQTCVIQEEVGMQCKDFDSFLALPAELRVSR) the chain is Extracellular. Residues 82–102 (ILMFLSNGLGFLGLLVSGFGL) form a helical membrane-spanning segment. Residues 103 to 117 (DCLRIGESQRDLKRR) are Cytoplasmic-facing. A helical membrane pass occupies residues 118-138 (LLILGGILSWASGITALVPVS). Residues 139 to 161 (WVAHKTVQEFWDENVPDFVPRWE) are Extracellular-facing. A helical transmembrane segment spans residues 162–182 (FGEALFLGWFAGLSLLLGGCL). Over 183 to 220 (LNCAACSSHAPLALGHYAVAQMQTQCPYLEDGTADPQV) the chain is Cytoplasmic.

Belongs to the claudin family.

Its subcellular location is the cell junction. It localises to the tight junction. It is found in the cell membrane. In terms of biological role, plays a major role in tight junction-specific obliteration of the intercellular space, through calcium-independent cell-adhesion activity. The sequence is that of Claudin-24 from Homo sapiens (Human).